The primary structure comprises 530 residues: Rho GTPase-activating protein 36 (530 aa).

The first 19 residues, 1–19, serve as a signal peptide directing secretion; the sequence is MPPLLLLSALIFLVNVLGG. The Rho-GAP domain occupies 209–409; that stretch reads MSLNPIAKQI…AMIDNWDVLF (201 aa). Residues 471 to 512 are disordered; the sequence is GQSKPFDEGSSEEPAVPPGTARSHDDEEGAGNPLILEQDRPL.

In terms of assembly, may interacts (via the Rho-GAP domain) with the active form of RAC1.

In terms of biological role, GTPase activator for the Rho-type GTPases by converting them to an inactive GDP-bound state. In Bos taurus (Bovine), this protein is Rho GTPase-activating protein 36 (ARHGAP36).